Reading from the N-terminus, the 129-residue chain is Replication initiation control protein YabA (129 aa).

Residues H103, C105, C119, and C122 each coordinate Zn(2+).

Belongs to the YabA family. Homotetramer. Interacts with both DnaA and DnaN, acting as a bridge between these two proteins. Zn(2+) serves as cofactor.

The protein resides in the cytoplasm. It is found in the nucleoid. Functionally, involved in control of chromosome replication initiation. Inhibits the cooperative binding of DnaA to the oriC region, thus negatively regulating initiation of chromosome replication. Inhibits the ability of DnaA-ATP to form a helix on DNA; does not disassemble preformed DnaA-DNA helices. Decreases the residence time of DnaA on the chromosome at its binding sites (oriC, replication forks and promoter-binding sites). Tethers DnaA to the replication machinery via the DNA polymerase beta sliding clamp subunit (dnaN). Associates with oriC and other DnaA targets on the chromosome in a DnaA-dependent manner. In Listeria monocytogenes serotype 4b (strain CLIP80459), this protein is Replication initiation control protein YabA.